We begin with the raw amino-acid sequence, 267 residues long: Cytochrome b (267 aa).

Transmembrane regions (helical) follow at residues 33–53 (FGSL…FLAM), 77–98 (WLIR…FIHV), 113–133 (WNIG…GYVL), and 178–198 (FFAF…VHLL). Heme b-binding residues include His83 and His97. Heme b-binding residues include His182 and His196. His201 provides a ligand contact to a ubiquinone. The chain crosses the membrane as a helical span at residues 226–246 (IKDLLGVILLLMVLMILVLFF).

Belongs to the cytochrome b family. In terms of assembly, the cytochrome bc1 complex contains 11 subunits: 3 respiratory subunits (MT-CYB, CYC1 and UQCRFS1), 2 core proteins (UQCRC1 and UQCRC2) and 6 low-molecular weight proteins (UQCRH/QCR6, UQCRB/QCR7, UQCRQ/QCR8, UQCR10/QCR9, UQCR11/QCR10 and a cleavage product of UQCRFS1). This cytochrome bc1 complex then forms a dimer. It depends on heme b as a cofactor.

The protein localises to the mitochondrion inner membrane. Component of the ubiquinol-cytochrome c reductase complex (complex III or cytochrome b-c1 complex) that is part of the mitochondrial respiratory chain. The b-c1 complex mediates electron transfer from ubiquinol to cytochrome c. Contributes to the generation of a proton gradient across the mitochondrial membrane that is then used for ATP synthesis. This chain is Cytochrome b (MT-CYB), found in Abrothrix olivaceus (Olive grass mouse).